The sequence spans 148 residues: MKAVIILGLVLLSVTVQGKIFERCELARTLKRLGLDGYRGISLANWVCLAKWESDYNTQATNYNPGDQSTDYGIFQINSHYWCNNGKTPGAVNACHISCNALLQDNIADAVTCAKRVVSDPQGIRAWVAWRNHCQNRDVSQYVQGCGV.

Residues 1–18 (MKAVIILGLVLLSVTVQG) form the signal peptide. Residues 19–148 (KIFERCELAR…VSQYVQGCGV (130 aa)) form the C-type lysozyme domain. Intrachain disulfides connect C24–C146, C48–C134, C83–C99, and C95–C113. Catalysis depends on residues E53 and D71.

This sequence belongs to the glycosyl hydrolase 22 family. In terms of assembly, monomer.

The protein localises to the secreted. The catalysed reaction is Hydrolysis of (1-&gt;4)-beta-linkages between N-acetylmuramic acid and N-acetyl-D-glucosamine residues in a peptidoglycan and between N-acetyl-D-glucosamine residues in chitodextrins.. Lysozymes have primarily a bacteriolytic function; those in tissues and body fluids are associated with the monocyte-macrophage system and enhance the activity of immunoagents. The polypeptide is Lysozyme C (LYZ) (Papio anubis (Olive baboon)).